Reading from the N-terminus, the 153-residue chain is Putative riboflavin kinase (153 aa).

Mg(2+)-binding residues include T28 and N30. Catalysis depends on E80, which acts as the Nucleophile.

As to quaternary structure, monomer. Zn(2+) is required as a cofactor. It depends on Mg(2+) as a cofactor.

It is found in the cytoplasm. The enzyme catalyses riboflavin + ATP = FMN + ADP + H(+). Its pathway is cofactor biosynthesis; FMN biosynthesis; FMN from riboflavin (ATP route): step 1/1. Functionally, catalyzes the phosphorylation of riboflavin (vitamin B2) to form flavin-mononucleotide (FMN). The sequence is that of Putative riboflavin kinase from Drosophila melanogaster (Fruit fly).